The chain runs to 261 residues: NAD(P)H-quinone oxidoreductase subunit K, chloroplastic (261 aa).

Residues cysteine 64, cysteine 65, cysteine 129, and cysteine 160 each contribute to the [4Fe-4S] cluster site.

Belongs to the complex I 20 kDa subunit family. NDH is composed of at least 16 different subunits, 5 of which are encoded in the nucleus. [4Fe-4S] cluster serves as cofactor.

The protein localises to the plastid. It is found in the chloroplast thylakoid membrane. It carries out the reaction a plastoquinone + NADH + (n+1) H(+)(in) = a plastoquinol + NAD(+) + n H(+)(out). The enzyme catalyses a plastoquinone + NADPH + (n+1) H(+)(in) = a plastoquinol + NADP(+) + n H(+)(out). NDH shuttles electrons from NAD(P)H:plastoquinone, via FMN and iron-sulfur (Fe-S) centers, to quinones in the photosynthetic chain and possibly in a chloroplast respiratory chain. The immediate electron acceptor for the enzyme in this species is believed to be plastoquinone. Couples the redox reaction to proton translocation, and thus conserves the redox energy in a proton gradient. This chain is NAD(P)H-quinone oxidoreductase subunit K, chloroplastic, found in Physcomitrium patens (Spreading-leaved earth moss).